The sequence spans 201 residues: Recombination protein RecR (201 aa).

The segment at 60-75 adopts a C4-type zinc-finger fold; that stretch reads CHECGNVDTSDPCTIC. In terms of domain architecture, Toprim spans 83–178; sequence SILVVVEDVS…KVTKLAHGVP (96 aa).

It belongs to the RecR family.

In terms of biological role, may play a role in DNA repair. It seems to be involved in an RecBC-independent recombinational process of DNA repair. It may act with RecF and RecO. The protein is Recombination protein RecR of Methylobacterium nodulans (strain LMG 21967 / CNCM I-2342 / ORS 2060).